The chain runs to 189 residues: Protein F29A7.6 (189 aa).

The tract at residues 124 to 161 is disordered; that stretch reads KSLGGQKLAALDKKSQSKRERRQQNERNEETTGGRRFN. Positions 133–161 are enriched in basic and acidic residues; it reads ALDKKSQSKRERRQQNERNEETTGGRRFN.

Belongs to the MPP6 family.

In Caenorhabditis elegans, this protein is Protein F29A7.6.